Consider the following 130-residue polypeptide: Transcription antitermination protein NusB (130 aa).

This sequence belongs to the NusB family.

Involved in transcription antitermination. Required for transcription of ribosomal RNA (rRNA) genes. Binds specifically to the boxA antiterminator sequence of the ribosomal RNA (rrn) operons. This chain is Transcription antitermination protein NusB, found in Bacillus cereus (strain ATCC 10987 / NRS 248).